A 600-amino-acid chain; its full sequence is Glutamine--fructose-6-phosphate aminotransferase [isomerizing] (600 aa).

Cys2 (nucleophile; for GATase activity) is an active-site residue. The Glutamine amidotransferase type-2 domain maps to Cys2–Lys217. 2 consecutive SIS domains span residues Ile283–Lys422 and Ile452–Pro590. Lys595 (for Fru-6P isomerization activity) is an active-site residue.

As to quaternary structure, homodimer.

The protein resides in the cytoplasm. It carries out the reaction D-fructose 6-phosphate + L-glutamine = D-glucosamine 6-phosphate + L-glutamate. Catalyzes the first step in hexosamine metabolism, converting fructose-6P into glucosamine-6P using glutamine as a nitrogen source. This Bacillus licheniformis (strain ATCC 14580 / DSM 13 / JCM 2505 / CCUG 7422 / NBRC 12200 / NCIMB 9375 / NCTC 10341 / NRRL NRS-1264 / Gibson 46) protein is Glutamine--fructose-6-phosphate aminotransferase [isomerizing].